A 257-amino-acid chain; its full sequence is 5'-nucleotidase SurE (257 aa).

A divalent metal cation contacts are provided by aspartate 13, aspartate 14, serine 44, and asparagine 100.

This sequence belongs to the SurE nucleotidase family. A divalent metal cation serves as cofactor.

It is found in the cytoplasm. It catalyses the reaction a ribonucleoside 5'-phosphate + H2O = a ribonucleoside + phosphate. Nucleotidase that shows phosphatase activity on nucleoside 5'-monophosphates. This chain is 5'-nucleotidase SurE, found in Phocaeicola vulgatus (strain ATCC 8482 / DSM 1447 / JCM 5826 / CCUG 4940 / NBRC 14291 / NCTC 11154) (Bacteroides vulgatus).